The chain runs to 72 residues: Gas vesicle protein A (72 aa).

This sequence belongs to the gas vesicle GvpA family. As to quaternary structure, the gas vesicle shell is 2 nm thick and consists of a single layer of this protein. It forms helical ribs nearly perpendicular to the long axis of the vesicle.

The protein resides in the gas vesicle shell. Functionally, gas vesicles are hollow, gas filled proteinaceous nanostructures found in some microorganisms. During planktonic growth they allow positioning of the organism at a favorable depth for light or nutrient acquisition. GvpA forms the protein shell. The chain is Gas vesicle protein A from Synechococcus sp. (strain JA-3-3Ab) (Cyanobacteria bacterium Yellowstone A-Prime).